A 231-amino-acid polypeptide reads, in one-letter code: Flagellar L-ring protein (231 aa).

An N-terminal signal peptide occupies residues 1 to 18 (MNRLLSVFALGGAVLLAG). A lipid anchor (N-palmitoyl cysteine) is attached at cysteine 19. Cysteine 19 is lipidated: S-diacylglycerol cysteine.

This sequence belongs to the FlgH family. The basal body constitutes a major portion of the flagellar organelle and consists of four rings (L,P,S, and M) mounted on a central rod.

The protein resides in the cell outer membrane. Its subcellular location is the bacterial flagellum basal body. In terms of biological role, assembles around the rod to form the L-ring and probably protects the motor/basal body from shearing forces during rotation. The sequence is that of Flagellar L-ring protein from Pseudomonas putida (strain ATCC 700007 / DSM 6899 / JCM 31910 / BCRC 17059 / LMG 24140 / F1).